The following is a 154-amino-acid chain: MINKIKKNPDTEVYALGQHICMSAHKARRVIDQIRGRSYEETLMILELMPYRACYPIFKLVYSAAANASHNMGFNEADLIISKAEVNEGPTMKRLKPRARGRSYPIKRPTCHITIVLKDISLDEEYLIWLRKYGWIYRNKYTDRMCRDKYGIVG.

The protein belongs to the universal ribosomal protein uL22 family. In terms of assembly, part of the 50S ribosomal subunit.

Its subcellular location is the plastid. It is found in the chloroplast. Its function is as follows. This protein binds specifically to 23S rRNA. Functionally, the globular domain of the protein is located near the polypeptide exit tunnel on the outside of the subunit, while an extended beta-hairpin is found that lines the wall of the exit tunnel in the center of the 70S ribosome. The sequence is that of Large ribosomal subunit protein uL22c (rpl22) from Platanus occidentalis (Sycamore).